The chain runs to 600 residues: DNA repair and recombination protein mus-11 (600 aa).

The DNA-binding element occupies 148–152; sequence KRALR. The segment covering 268–319 has biased composition (polar residues); that stretch reads LNPQAQQSRPLSRSGSTGSLNTRQQPQNSHQFTARAQSRPPQQQLNSNQSRP. 2 disordered regions span residues 268–357 and 387–600; these read LNPQ…AGAA and APKP…QRLA. Low complexity-rich tracts occupy residues 325–343 and 458–470; these read NNSS…TTPQ and ARSA…RAGP. The segment covering 502-512 has biased composition (polar residues); sequence GFSSSPSTNRG. Low complexity-rich tracts occupy residues 540-564 and 577-591; these read SATT…APSA and ANAS…ATSG.

The protein belongs to the RAD52 family. Part of a complex that includes mei-3/rad51 and mus-11/rad52.

It localises to the nucleus. Involved in DNA double-strand break (DSB) repair and recombination. Promotes the annealing of complementary single-stranded DNA and by stimulation of the mei-3/rad51 recombinase. This chain is DNA repair and recombination protein mus-11 (mus-11), found in Neurospora crassa (strain ATCC 24698 / 74-OR23-1A / CBS 708.71 / DSM 1257 / FGSC 987).